The sequence spans 452 residues: Glycoprotein endo-alpha-1,2-mannosidase-like protein (452 aa).

Residues 1 to 8 (MARRRRRA) are Cytoplasmic-facing. Residues 9 to 29 (CIALFLVLLFAFGTLMGLRTL) traverse the membrane as a helical; Signal-anchor for type II membrane protein segment. At 30–452 (KAPDGLPALG…FIKEKEQWLM (423 aa)) the chain is on the lumenal side. A disordered region spans residues 40–90 (PGPELAPFERRPEGNPAPARAPAAPAAPPPPPPRTAAPRASLGPAEADPAP). Over residues 64 to 74 (PAAPPPPPPRT) the composition is skewed to pro residues.

Belongs to the glycosyl hydrolase 99 family.

The protein localises to the golgi apparatus membrane. In Mus musculus (Mouse), this protein is Glycoprotein endo-alpha-1,2-mannosidase-like protein (Maneal).